A 172-amino-acid polypeptide reads, in one-letter code: RNA pyrophosphohydrolase (172 aa).

In terms of domain architecture, Nudix hydrolase spans Gly6 to Lys149. The Nudix box signature appears at Gly38–Gly59.

It belongs to the Nudix hydrolase family. RppH subfamily. It depends on a divalent metal cation as a cofactor.

In terms of biological role, accelerates the degradation of transcripts by removing pyrophosphate from the 5'-end of triphosphorylated RNA, leading to a more labile monophosphorylated state that can stimulate subsequent ribonuclease cleavage. The chain is RNA pyrophosphohydrolase from Vibrio vulnificus (strain CMCP6).